The chain runs to 182 residues: Crossover junction endodeoxyribonuclease RuvC (182 aa).

Catalysis depends on residues Asp7, Glu69, and Asp141. Mg(2+)-binding residues include Asp7, Glu69, and Asp141.

The protein belongs to the RuvC family. As to quaternary structure, homodimer which binds Holliday junction (HJ) DNA. The HJ becomes 2-fold symmetrical on binding to RuvC with unstacked arms; it has a different conformation from HJ DNA in complex with RuvA. In the full resolvosome a probable DNA-RuvA(4)-RuvB(12)-RuvC(2) complex forms which resolves the HJ. Requires Mg(2+) as cofactor.

The protein resides in the cytoplasm. It catalyses the reaction Endonucleolytic cleavage at a junction such as a reciprocal single-stranded crossover between two homologous DNA duplexes (Holliday junction).. Its function is as follows. The RuvA-RuvB-RuvC complex processes Holliday junction (HJ) DNA during genetic recombination and DNA repair. Endonuclease that resolves HJ intermediates. Cleaves cruciform DNA by making single-stranded nicks across the HJ at symmetrical positions within the homologous arms, yielding a 5'-phosphate and a 3'-hydroxyl group; requires a central core of homology in the junction. The consensus cleavage sequence is 5'-(A/T)TT(C/G)-3'. Cleavage occurs on the 3'-side of the TT dinucleotide at the point of strand exchange. HJ branch migration catalyzed by RuvA-RuvB allows RuvC to scan DNA until it finds its consensus sequence, where it cleaves and resolves the cruciform DNA. The chain is Crossover junction endodeoxyribonuclease RuvC from Albidiferax ferrireducens (strain ATCC BAA-621 / DSM 15236 / T118) (Rhodoferax ferrireducens).